Reading from the N-terminus, the 288-residue chain is Nucleotide-binding protein Gura_2968 (288 aa).

8-15 is a binding site for ATP; sequence GLSGSGKS. GTP is bound at residue 59–62; the sequence is DIRG.

Belongs to the RapZ-like family.

In terms of biological role, displays ATPase and GTPase activities. The protein is Nucleotide-binding protein Gura_2968 of Geotalea uraniireducens (strain Rf4) (Geobacter uraniireducens).